A 1368-amino-acid chain; its full sequence is DNA-directed RNA polymerase subunit beta (1368 aa).

Belongs to the RNA polymerase beta chain family. The RNAP catalytic core consists of 2 alpha, 1 beta, 1 beta' and 1 omega subunit. When a sigma factor is associated with the core the holoenzyme is formed, which can initiate transcription.

It catalyses the reaction RNA(n) + a ribonucleoside 5'-triphosphate = RNA(n+1) + diphosphate. Its function is as follows. DNA-dependent RNA polymerase catalyzes the transcription of DNA into RNA using the four ribonucleoside triphosphates as substrates. This chain is DNA-directed RNA polymerase subunit beta, found in Syntrophotalea carbinolica (strain DSM 2380 / NBRC 103641 / GraBd1) (Pelobacter carbinolicus).